The following is a 347-amino-acid chain: MRFSTLLKDLQTGEAELRWSQCGADPILAGAASLEQAKGDQLSFLEKGNALIAALTETGAGALLLPDQPDLIQCASERGIAFAVLANPRLAFAEALERLHPRLRPLAEIHPSAVVDERAVVGPGTFIAPRVCIGASSRIGANCIVHPGVVIYDDVEVGEGCELHANAVLHPGSRLGRGCVVNSNAVIGSEGFGFVPTPRGWRKMPQTGQVVLEDGVEVGCGSTIDRPSVGETRIGAGSKIDNLVQIGHGVTTGRGCALASQVGIAGGAKLGHGVILAGQVGVANRAVVGDGAIASSKSGIHGEVAPGEVVSGYPAIPNRLWLRCSAAFSKLPEMAKTLRELKRDISQ.

The active-site Proton acceptor is His248.

Belongs to the transferase hexapeptide repeat family. LpxD subfamily. As to quaternary structure, homotrimer.

It catalyses the reaction a UDP-3-O-[(3R)-3-hydroxyacyl]-alpha-D-glucosamine + a (3R)-hydroxyacyl-[ACP] = a UDP-2-N,3-O-bis[(3R)-3-hydroxyacyl]-alpha-D-glucosamine + holo-[ACP] + H(+). Its pathway is bacterial outer membrane biogenesis; LPS lipid A biosynthesis. Catalyzes the N-acylation of UDP-3-O-acylglucosamine using 3-hydroxyacyl-ACP as the acyl donor. Is involved in the biosynthesis of lipid A, a phosphorylated glycolipid that anchors the lipopolysaccharide to the outer membrane of the cell. This Synechococcus sp. (strain CC9902) protein is UDP-3-O-acylglucosamine N-acyltransferase.